The following is a 684-amino-acid chain: MSAQDFLVELGTEELPPKALASLGDAFLAGIEKGLQAAGLNYTSKQVYAAPRRLAVLLRQLDVQQPDRSINIDGPPRQAAFDAEGNPTQAALGFAKKCGVELSDIDQSGPKLRFSQHIPGKATASLLPTIVEDSLNDLPIPKRMHWGASREEFVRPTQWLVMLLGDQVVDCTILAQKAGRESRGHRFHHPENVVITTPANYVEDLRKAYVLADFAERRELISKRTAELAMQQEGSAIVPPALLDEVTALVEWPVPLVCSFEERFLEVPQEALITTMQDNQKYFCLLDSEGKLLPRFITVANVESRDPKQIVEGNEKVVRPRLTDAEFFFKQDKKQPLESFNERLKNVVFQAQLGTVFDKAERVSKLAAFIAPYIGGSAANAGRAGLLSKCDLASEMVGEFPEMQGIAGYYYALNDGEPQDVALALNEQYMPRGAGAELPQTLTGAAVAIADKLDTLVGIFGIGMLPTGSKDPYALRRAALGVLRILIEKQLDLDLTTAVEFAVKQFGTKVKAAGLSEQVLEFIFDRLRARYEDEGIDVATYLSVRALKPGSALDFDQRVQAVQAFRKLPEANALAAANKRVSNLLGKAEGAIADQVEPKYFDNANEFSLYSAIQQADQAVQPMASARQYNEALARLAALRDPVDAFFEAVLVNAEDAKVRANRYALLSRLRGLFLGVADISLLG.

The protein belongs to the class-II aminoacyl-tRNA synthetase family. Tetramer of two alpha and two beta subunits.

Its subcellular location is the cytoplasm. The catalysed reaction is tRNA(Gly) + glycine + ATP = glycyl-tRNA(Gly) + AMP + diphosphate. In Pseudomonas entomophila (strain L48), this protein is Glycine--tRNA ligase beta subunit.